The sequence spans 577 residues: Probable HECT-type ubiquitin ligase-interacting protein creD (577 aa).

Disordered stretches follow at residues 376–398 (LDPAGYRTPGPGSGPGTPFGTLS) and 428–566 (NLHA…EEER). 2 stretches are compositionally biased toward polar residues: residues 428–447 (NLHASRHSNPSPSESENQLE) and 460–472 (SSGSNTHSLTSPE). Over residues 473 to 486 (LSRRPSDEVDHDHV) the composition is skewed to basic and acidic residues. Polar residues predominate over residues 528 to 544 (SPQQAHVRSANRSSSYF).

This sequence belongs to the arrestin family. In terms of assembly, interacts with hulA.

Its function is as follows. Component of the regulatory network controlling carbon source utilization through ubiquitination and deubiquitination involving creA, creB, creC, creD and acrB. May be involved in signaling by recognizing appropriately phosphorylated substrates via its arrestin domains and then recruit a HECT-type ubiquitin ligase such as hulA, leading to ubiquitination of the substrate, providing a link between ubiquitination and phosphorylation in protein regulation and stability. The sequence is that of Probable HECT-type ubiquitin ligase-interacting protein creD (creD) from Aspergillus terreus (strain NIH 2624 / FGSC A1156).